The following is a 209-amino-acid chain: ATP-dependent Clp protease proteolytic subunit (209 aa).

S106 functions as the Nucleophile in the catalytic mechanism. H131 is an active-site residue.

It belongs to the peptidase S14 family. As to quaternary structure, fourteen ClpP subunits assemble into 2 heptameric rings which stack back to back to give a disk-like structure with a central cavity, resembling the structure of eukaryotic proteasomes.

It is found in the cytoplasm. The catalysed reaction is Hydrolysis of proteins to small peptides in the presence of ATP and magnesium. alpha-casein is the usual test substrate. In the absence of ATP, only oligopeptides shorter than five residues are hydrolyzed (such as succinyl-Leu-Tyr-|-NHMec, and Leu-Tyr-Leu-|-Tyr-Trp, in which cleavage of the -Tyr-|-Leu- and -Tyr-|-Trp bonds also occurs).. Its function is as follows. Cleaves peptides in various proteins in a process that requires ATP hydrolysis. Has a chymotrypsin-like activity. Plays a major role in the degradation of misfolded proteins. The polypeptide is ATP-dependent Clp protease proteolytic subunit (Brucella suis biovar 1 (strain 1330)).